A 76-amino-acid polypeptide reads, in one-letter code: MNRMLIIFVVVTVFGLASGLGPNMPAPDLAKRNGKGCTCNDGTTTGIFWAGSCPGGWSYCKTMWYWVVPGECCTQK.

A signal peptide spans 1–19 (MNRMLIIFVVVTVFGLASG). A propeptide spanning residues 20-30 (LGPNMPAPDLA) is cleaved from the precursor. Cystine bridges form between Cys-37–Cys-72, Cys-39–Cys-60, and Cys-53–Cys-73.

The protein belongs to the sea anemone sodium channel inhibitory toxin family. Type I subfamily. In terms of tissue distribution, expressed in acontia, a specialised envenomation structure laden with batteries of venom-containing nematocysts found only in the superfamily Metridioidea.

It localises to the secreted. The protein resides in the nematocyst. In terms of biological role, may affect sodium channels (Nav). This chain is Sea anemone sodium channel inhibitor type I, found in Calliactis polypus (Hermit crab anemone).